We begin with the raw amino-acid sequence, 223 residues long: Germin-like protein 1-3 (223 aa).

The first 22 residues, 1-22 (MAKLILATFAVVFMALAATSLA), serve as a signal peptide directing secretion. Cysteines 32 and 50 form a disulfide. N55 carries N-linked (GlcNAc...) asparagine glycosylation. A Cupin type-1 domain is found at 64–212 (DGLMKAGNTG…AFQVDGGMVE (149 aa)). Positions 112, 114, 119, and 158 each coordinate Mn(2+).

This sequence belongs to the germin family. In terms of assembly, oligomer (believed to be a pentamer but probably hexamer).

The protein localises to the secreted. It localises to the extracellular space. It is found in the apoplast. Functionally, may play a role in plant defense. Probably has no oxalate oxidase activity even if the active site is conserved. This chain is Germin-like protein 1-3 (GER8), found in Oryza sativa subsp. japonica (Rice).